A 312-amino-acid polypeptide reads, in one-letter code: tRNA dimethylallyltransferase (312 aa).

11-18 (GPTAAGKS) is an ATP binding site. Substrate is bound at residue 13–18 (TAAGKS). Interaction with substrate tRNA stretches follow at residues 36-39 (DSAT), 160-164 (QRIQR), and 243-248 (RCVGYR).

The protein belongs to the IPP transferase family. In terms of assembly, monomer. The cofactor is Mg(2+).

The enzyme catalyses adenosine(37) in tRNA + dimethylallyl diphosphate = N(6)-dimethylallyladenosine(37) in tRNA + diphosphate. In terms of biological role, catalyzes the transfer of a dimethylallyl group onto the adenine at position 37 in tRNAs that read codons beginning with uridine, leading to the formation of N6-(dimethylallyl)adenosine (i(6)A). The chain is tRNA dimethylallyltransferase from Bordetella avium (strain 197N).